Consider the following 634-residue polypeptide: UPF0329 protein ECU07_1850/ECU10_0050 (634 aa).

Composition is skewed to basic and acidic residues over residues 354-365 (REEREKREESKG) and 397-407 (GESKEEDRGEE). The disordered stretch occupies residues 354–438 (REEREKREES…KGSGEKRISE (85 aa)). The span at 408–417 (GGVEAEDPLE) shows a compositional bias: acidic residues.

This sequence belongs to the UPF0329 family.

The sequence is that of UPF0329 protein ECU07_1850/ECU10_0050 from Encephalitozoon cuniculi (strain GB-M1) (Microsporidian parasite).